The primary structure comprises 216 residues: Probable phosphatase SPAC513.02 (216 aa).

Residue His-15 is the Tele-phosphohistidine intermediate of the active site.

The protein belongs to the phosphoglycerate mutase family. BPG-dependent PGAM subfamily.

The protein resides in the cytoplasm. It localises to the nucleus. This Schizosaccharomyces pombe (strain 972 / ATCC 24843) (Fission yeast) protein is Probable phosphatase SPAC513.02.